A 211-amino-acid polypeptide reads, in one-letter code: Prolactin (211 aa).

The signal sequence occupies residues 1–24 (MTHRRTKLFMMAAVVSYVMTSCGA). Disulfide bonds link Cys70–Cys184 and Cys201–Cys211.

It belongs to the somatotropin/prolactin family.

The protein localises to the secreted. The chain is Prolactin (prl) from Paralichthys olivaceus (Bastard halibut).